A 162-amino-acid polypeptide reads, in one-letter code: Cyclic pyranopterin monophosphate synthase (162 aa).

Substrate is bound by residues 75–77 and 116–117; these read MCH and ME. D131 is an active-site residue.

The protein belongs to the MoaC family. As to quaternary structure, homohexamer; trimer of dimers.

The catalysed reaction is (8S)-3',8-cyclo-7,8-dihydroguanosine 5'-triphosphate = cyclic pyranopterin phosphate + diphosphate. It functions in the pathway cofactor biosynthesis; molybdopterin biosynthesis. Catalyzes the conversion of (8S)-3',8-cyclo-7,8-dihydroguanosine 5'-triphosphate to cyclic pyranopterin monophosphate (cPMP). This Staphylococcus epidermidis (strain ATCC 35984 / DSM 28319 / BCRC 17069 / CCUG 31568 / BM 3577 / RP62A) protein is Cyclic pyranopterin monophosphate synthase.